A 64-amino-acid chain; its full sequence is UPF0337 protein SH2043 (64 aa).

The tract at residues 1–64 (MAEDKFEQAK…DKVKGNNDNK (64 aa)) is disordered. The segment covering 22–64 (DNKDLEKEGQNDKASGKAKEAVENVKNKANDLIDKVKGNNDNK) has biased composition (basic and acidic residues).

The protein belongs to the UPF0337 (CsbD) family.

The protein is UPF0337 protein SH2043 of Staphylococcus haemolyticus (strain JCSC1435).